We begin with the raw amino-acid sequence, 101 residues long: Putative membrane protein insertion efficiency factor (101 aa).

This sequence belongs to the UPF0161 family.

The protein resides in the cell inner membrane. Functionally, could be involved in insertion of integral membrane proteins into the membrane. The protein is Putative membrane protein insertion efficiency factor of Methylobacterium sp. (strain 4-46).